We begin with the raw amino-acid sequence, 457 residues long: Siroheme synthase (457 aa).

The tract at residues 1–204 (MDHLPIFCQL…NDQKAITETT (204 aa)) is precorrin-2 dehydrogenase /sirohydrochlorin ferrochelatase. NAD(+)-binding positions include 22–23 (DV) and 43–44 (LA). A Phosphoserine modification is found at Ser128. A uroporphyrinogen-III C-methyltransferase region spans residues 216–457 (GEVVLVGAGP…RDKLNWFSNH (242 aa)). Pro225 is a binding site for S-adenosyl-L-methionine. Asp248 acts as the Proton acceptor in catalysis. The active-site Proton donor is Lys270. S-adenosyl-L-methionine-binding positions include 301–303 (GGD), Ile306, 331–332 (TA), Met382, and Gly411.

The protein in the N-terminal section; belongs to the precorrin-2 dehydrogenase / sirohydrochlorin ferrochelatase family. It in the C-terminal section; belongs to the precorrin methyltransferase family.

The catalysed reaction is uroporphyrinogen III + 2 S-adenosyl-L-methionine = precorrin-2 + 2 S-adenosyl-L-homocysteine + H(+). It carries out the reaction precorrin-2 + NAD(+) = sirohydrochlorin + NADH + 2 H(+). The enzyme catalyses siroheme + 2 H(+) = sirohydrochlorin + Fe(2+). It participates in cofactor biosynthesis; adenosylcobalamin biosynthesis; precorrin-2 from uroporphyrinogen III: step 1/1. Its pathway is cofactor biosynthesis; adenosylcobalamin biosynthesis; sirohydrochlorin from precorrin-2: step 1/1. It functions in the pathway porphyrin-containing compound metabolism; siroheme biosynthesis; precorrin-2 from uroporphyrinogen III: step 1/1. The protein operates within porphyrin-containing compound metabolism; siroheme biosynthesis; siroheme from sirohydrochlorin: step 1/1. It participates in porphyrin-containing compound metabolism; siroheme biosynthesis; sirohydrochlorin from precorrin-2: step 1/1. Functionally, multifunctional enzyme that catalyzes the SAM-dependent methylations of uroporphyrinogen III at position C-2 and C-7 to form precorrin-2 via precorrin-1. Then it catalyzes the NAD-dependent ring dehydrogenation of precorrin-2 to yield sirohydrochlorin. Finally, it catalyzes the ferrochelation of sirohydrochlorin to yield siroheme. This is Siroheme synthase from Escherichia coli O157:H7 (strain EC4115 / EHEC).